The chain runs to 245 residues: tRNA pseudouridine synthase A (245 aa).

Aspartate 52 functions as the Nucleophile in the catalytic mechanism. Tyrosine 111 contacts substrate.

It belongs to the tRNA pseudouridine synthase TruA family. In terms of assembly, homodimer.

The enzyme catalyses uridine(38/39/40) in tRNA = pseudouridine(38/39/40) in tRNA. Formation of pseudouridine at positions 38, 39 and 40 in the anticodon stem and loop of transfer RNAs. This is tRNA pseudouridine synthase A from Rickettsia bellii (strain RML369-C).